The sequence spans 391 residues: uncharacterized protein (391 aa).

The signal sequence occupies residues 1-20; that stretch reads MRKLFLLSILMIGVIVAFAG. Cysteine 21 carries S-archaeol cysteine lipidation. Residues 104 to 377 enclose the Fe/B12 periplasmic-binding domain; the sequence is RIVTDFYCPI…DFAKMIHPEL (274 aa).

The protein resides in the cell membrane. This is an uncharacterized protein from Methanocaldococcus jannaschii (strain ATCC 43067 / DSM 2661 / JAL-1 / JCM 10045 / NBRC 100440) (Methanococcus jannaschii).